We begin with the raw amino-acid sequence, 251 residues long: Uroporphyrinogen-III synthase (251 aa).

The interval 231 to 251 is disordered; the sequence is PAPNPESLASSIVAFDEENSS.

It belongs to the uroporphyrinogen-III synthase family.

The enzyme catalyses hydroxymethylbilane = uroporphyrinogen III + H2O. The protein operates within porphyrin-containing compound metabolism; protoporphyrin-IX biosynthesis; coproporphyrinogen-III from 5-aminolevulinate: step 3/4. In terms of biological role, catalyzes cyclization of the linear tetrapyrrole, hydroxymethylbilane, to the macrocyclic uroporphyrinogen III. This Schizosaccharomyces pombe (strain 972 / ATCC 24843) (Fission yeast) protein is Uroporphyrinogen-III synthase (ups1).